The sequence spans 144 residues: Snake venom vascular endothelial growth factor toxin cratrin (144 aa).

The signal sequence occupies residues 1 to 24 (MAVYLLAVAILFCIQGWPSGTVQG). Pyrrolidone carboxylic acid is present on Gln-25. 3 disulfide bridges follow: Cys-38-Cys-80, Cys-69-Cys-115, and Cys-73-Cys-117. Residues 119–144 (PRSTVNNGKRKKNPKEGEPRAKFPLV) form a disordered region. Basic and acidic residues predominate over residues 132 to 144 (PKEGEPRAKFPLV).

Belongs to the PDGF/VEGF growth factor family. Snake venom VEGF subfamily. Homodimer; disulfide-linked. Interacts with VEGF receptor-1 (FLT1) with a high affinity, whereas it binds to VEGF receptor-2 (KDR) with a low affinity. Does not bind VEGF receptor-3 (FLT4). Expressed by the venom gland.

The protein localises to the secreted. Snake venom VEGFs that may contribute to venom dispersion and prey subjugation by inducing vascular permeability and hypotension. This protein induces an increase in capillary permeability after intradermal injection, as well as a drastic hypotensive effect after intravenous injection. The hypotension is mediated by nitric oxide (NO), which is produced by VEGF-activated endothelium NO synthase. Also induces angiogenesis in vitro. Like other crotalid VEGFs, this protein interacts with VEGF receptor-1 (FLT1) with a high affinity, whereas it binds to VEGF receptor-2 (KDR) with a low affinity. The chain is Snake venom vascular endothelial growth factor toxin cratrin from Crotalus atrox (Western diamondback rattlesnake).